The sequence spans 412 residues: Subtilisin-like protease 6 (412 aa).

Positions 1 to 20 (MGFITKAIPIVLAALSTVNG) are cleaved as a signal peptide. The propeptide occupies 21 to 126 (AKILEAGPHA…VVRTSTNGTN (106 aa)). The Inhibitor I9 domain maps to 36–120 (KYIVVMKREV…YIEPDFVVRT (85 aa)). N-linked (GlcNAc...) asparagine glycans are attached at residues Asn123 and Asn126. Residues 135–412 (SWGLARVSSK…SKLIYNGSGK (278 aa)) enclose the Peptidase S8 domain. Catalysis depends on charge relay system residues Asp167 and His198. N-linked (GlcNAc...) asparagine glycosylation is found at Asn252 and Asn264. Ser358 functions as the Charge relay system in the catalytic mechanism. An N-linked (GlcNAc...) asparagine glycan is attached at Asn408.

Belongs to the peptidase S8 family.

Its subcellular location is the secreted. In terms of biological role, secreted subtilisin-like serine protease with keratinolytic activity that contributes to pathogenicity. In Trichophyton equinum (Horse ringworm fungus), this protein is Subtilisin-like protease 6 (SUB6).